A 695-amino-acid chain; its full sequence is MNQDPAETRDTAAPPPADTTSPSPVSPELEPRSAPGAQDIDAASASLTVDEDDEARLPEIDDDSAEVADGPLAVGRAAIEQAVRLAPTSPGVYRMLNAADDVLYVGKAKNVKKRLSSYARPTGHVVRIARMIAATVTVEIISTATETEALLLEANLIKQLRPRFNVLLRDDKSFPYILITGDHWAPQILKHRGAQSRPGRYFGPFASVGAVNRTITALQRAFLVRSCTDSFFESRTRPCLLYQIRRCAGPCTGEVDFPGYTELVREATDFLSGRSRAVKQELAVEMEKASNELEFETAALYRDRLAALSAIQSQQGINPRTVEEADVFAIHQEGGYSCVEVFFFRTGQNWGNRAYFPRAEKSFTPEEVLASFLAQFYDDKPPPKLILLSHDIEECELLANALCIKAGRKVEVAAPKRGEKKELVAHALTNAREALGRKLADTATQTRLMQGLATTLGLPRPPQRIEVYDNSHIQGTNAVGAMIVAGPDGFIKNQYRKFNIRSEGLTPGDDYAMMREVLQRRFKRLAAAKAEGDAAKPKEDDTPLWPDLVIIDGGRGQLNAARGVLTELGLGAEVTLLGVAKGPDRDAGRETLFMPEREAIKLEPRDPVLYFIQRLRDEAHRFVIGSHRKLRKKDIREAGLQEIPGIGPTRKRALLHHFGTLKEIERASIGDLGKVPGISAESARRIFDFFHPGPG.

The segment covering 1–10 (MNQDPAETRD) has biased composition (basic and acidic residues). Residues 1 to 53 (MNQDPAETRDTAAPPPADTTSPSPVSPELEPRSAPGAQDIDAASASLTVDEDD) form a disordered region. Positions 18–27 (DTTSPSPVSP) are enriched in low complexity. The GIY-YIG domain maps to 88-166 (TSPGVYRMLN…IKQLRPRFNV (79 aa)). The UVR domain occupies 276–311 (RAVKQELAVEMEKASNELEFETAALYRDRLAALSAI).

This sequence belongs to the UvrC family. In terms of assembly, interacts with UvrB in an incision complex.

It localises to the cytoplasm. The UvrABC repair system catalyzes the recognition and processing of DNA lesions. UvrC both incises the 5' and 3' sides of the lesion. The N-terminal half is responsible for the 3' incision and the C-terminal half is responsible for the 5' incision. The sequence is that of UvrABC system protein C from Rhodopseudomonas palustris (strain BisB5).